The primary structure comprises 276 residues: Secreted RxLR effector protein 150 (276 aa).

A signal peptide spans 1 to 18 (MRNIAFLIGLFFIGYSSC). A RxLR-dEER motif is present at residues 49 to 64 (RTLQADDRERILAEER).

Belongs to the RxLR effector family.

The protein localises to the secreted. It is found in the host nucleus. Its subcellular location is the host cytoplasm. Functionally, secreted effector that partially suppresses the host cell death induced by cell death-inducing proteins. This Plasmopara viticola (Downy mildew of grapevine) protein is Secreted RxLR effector protein 150.